The following is a 380-amino-acid chain: O-antigen polymerase (380 aa).

The next 12 membrane-spanning stretches (helical) occupy residues 1 to 21 (MTYF…RLTP), 27 to 47 (NIVL…TFNE), 55 to 75 (ATTL…YILI), 94 to 114 (YIYW…IILL), 132 to 152 (SISG…MYLA), 169 to 189 (FLLA…VYIV), 201 to 221 (LIYG…LGKF), 229 to 249 (IISA…AAFN), 282 to 302 (ILPW…FAPW), 306 to 326 (LGLY…GIWF), 332 to 352 (LAVG…FFQE), and 353 to 373 (HYLL…LLAM).

It localises to the cell inner membrane. It catalyses the reaction n lipid-linked O-antigen repeat units = a lipid-linked O antigen + (n-1) polyisoprenyl diphosphate.. It participates in bacterial outer membrane biogenesis; LPS O-antigen biosynthesis. Its function is as follows. Polymerase involved in the biosynthesis of the lipopolysaccharide (LPS). Catalyzes the polymerization of the O-antigen repeat units on the periplasmic face of the inner membrane, leading to the formation of the lipid-linked O-antigen molecule. The chain is O-antigen polymerase from Shigella dysenteriae.